Reading from the N-terminus, the 98-residue chain is NADH-ubiquinone oxidoreductase chain 4L (98 aa).

The next 3 membrane-spanning stretches (helical) occupy residues 1-21, 29-49, and 61-81; these read MSMV…GLLM, SLLC…MTIL, and IILL…LVMV.

Belongs to the complex I subunit 4L family. In terms of assembly, core subunit of respiratory chain NADH dehydrogenase (Complex I) which is composed of 45 different subunits.

It localises to the mitochondrion inner membrane. It catalyses the reaction a ubiquinone + NADH + 5 H(+)(in) = a ubiquinol + NAD(+) + 4 H(+)(out). Its function is as follows. Core subunit of the mitochondrial membrane respiratory chain NADH dehydrogenase (Complex I) which catalyzes electron transfer from NADH through the respiratory chain, using ubiquinone as an electron acceptor. Part of the enzyme membrane arm which is embedded in the lipid bilayer and involved in proton translocation. In Arctocephalus australis (South American fur seal), this protein is NADH-ubiquinone oxidoreductase chain 4L (MT-ND4L).